The primary structure comprises 474 residues: L-lactate permease (474 aa).

11 consecutive transmembrane segments (helical) span residues 4 to 21, 28 to 48, 63 to 85, 105 to 127, 142 to 164, 177 to 199, 209 to 231, 238 to 255, 281 to 303, 324 to 346, and 387 to 409; these read AILAIIPILWLILSLAVF, ACFIGLIITLLTSIIGFHFSI, FWPIIYIIVAAVFTYNLTTASGG, LILAWGFGGFLEAIAGFGTAVAI, AALICLIANTTPTAFGAIGLPVT, LSVIVSLQLFILIVAIPFVLVSL, GVFGITLASGLAFALPQILVSNY, SIIGSLFCILVTILFVNL, FILVFFFIMLTSSLFPAINQLLA, WLTSPGTMIILATFIAGLIQGMS, and IAVSLVAVTGGFYPFIAPVIGTL.

This sequence belongs to the lactate permease family.

Its subcellular location is the cell membrane. In terms of biological role, plays a role in L-lactate utilization. The sequence is that of L-lactate permease (lctP) from Streptococcus iniae (Streptococcus shiloi).